Reading from the N-terminus, the 265-residue chain is Expansin-like A2 (265 aa).

Residues 1–21 (MLQGFLFLLSVVLLFSSSAAA) form the signal peptide. The 107-residue stretch at 42-148 (SGACAYGSMA…RRVPCDYGNK (107 aa)) folds into the Expansin-like EG45 domain. Residues N100 and N103 are each glycosylated (N-linked (GlcNAc...) asparagine). The region spanning 162-244 (NYLAIKLLYQ…NWEAGKSYDA (83 aa)) is the Expansin-like CBD domain.

It belongs to the expansin family. Expansin-like A subfamily.

It is found in the secreted. This is Expansin-like A2 (EXLA2) from Arabidopsis thaliana (Mouse-ear cress).